A 464-amino-acid polypeptide reads, in one-letter code: GPI mannosyltransferase 2 (464 aa).

Residues 1 to 70 (MYYIGHPSYY…MTRSGYNYFK (70 aa)) lie on the Cytoplasmic side of the membrane. The chain crosses the membrane as a helical span at residues 71–91 (GICVCTFLLSTILYLGIAVIM). Residues 92 to 166 (SHLCVFDDTA…ISFLAFRSKD (75 aa)) lie on the Lumenal side of the membrane. Residues N108 and N139 are each glycosylated (N-linked (GlcNAc...) asparagine). Residues 167-187 (VVLLGIVSCFASIFFHAIACY) form a helical membrane-spanning segment. Over 188-219 (ALYLLTKSIFSNQKMTAYTVIFYCFSPSGIYM) the chain is Cytoplasmic. The helical transmembrane segment at 220 to 240 (SVGYTESLFAAFSFLGLLLFI) threads the bilayer. At 241–260 (KKQQYPAAFLWSLATLIRSN) the chain is on the lumenal side. The helical transmembrane segment at 261 to 281 (GIFWCIFFGMPAIGTLKISLE) threads the bilayer. At 282–289 (RLQLTFMQ) the chain is on the cytoplasmic side. The chain crosses the membrane as a helical span at residues 290-309 (VSQLVGYGTKCLIILVPFFY). Residues 310–356 (NQYLGFKLFCPGVAWCNKSLPLIYPAVQEKYWNVGFLRYWTLNNIPN) are Lumenal-facing. The N-linked (GlcNAc...) asparagine glycan is linked to N326. A helical membrane pass occupies residues 357 to 377 (FLFALLSIIPILFALFYSISG). The Cytoplasmic portion of the chain corresponds to 378–388 (STLHSFRSIKS). A helical membrane pass occupies residues 389–409 (HLVLSALYLYIGCFHMHTQVL). Residues 410–440 (NRMSSALPLLYWSMAHATLYAKSRNLKAFGH) lie on the Lumenal side of the membrane. Residues 441-461 (CILFVWIVYTVIQAGLYGSFL) form a helical membrane-spanning segment. At 462–464 (PPA) the chain is on the cytoplasmic side.

The protein belongs to the PIGV family. Part of the GPI mannosyltransferase 2 complex composed of gpi18 and C167.09.

Its subcellular location is the endoplasmic reticulum membrane. Its pathway is glycolipid biosynthesis; glycosylphosphatidylinositol-anchor biosynthesis. Functionally, mannosyltransferase involved in glycosylphosphatidylinositol-anchor biosynthesis. Responsible for the transfer of the second mannose to the glycosylphosphatidylinositol during GPI precursor assembly. This is GPI mannosyltransferase 2 (gpi18) from Schizosaccharomyces pombe (strain 972 / ATCC 24843) (Fission yeast).